A 1187-amino-acid polypeptide reads, in one-letter code: uncharacterized protein (1187 aa).

Disordered regions lie at residues 302-405, 419-451, 511-551, 1095-1134, and 1148-1187; these read QKSQ…KPVG, QAFSPLLSSAGPGSPAAETKTEETTLGHGRASK, KAPG…LRLE, KSQRTPQGEQSRNMWAGLLSPEPGQSGDTEEVRGTPKLPD, and PHLPKQSKASRPTGGSFSSEGTGSQTSLEDSPHTSPPASL. The span at 321 to 333 shows a compositional bias: low complexity; it reads LPLSGPAGAPPLG. Residues 352–361 show a composition bias toward basic residues; it reads SRRKARHKAS. 2 stretches are compositionally biased toward low complexity: residues 422 to 435 and 517 to 534; these read SPLLSSAGPGSPAA and GTTLPTTSGSGPLSGEPP. Residues 1096–1107 are compositionally biased toward polar residues; sequence SQRTPQGEQSRN. The span at 1160 to 1174 shows a compositional bias: low complexity; that stretch reads TGGSFSSEGTGSQTS.

This is an uncharacterized protein from Mus musculus (Mouse).